Here is a 393-residue protein sequence, read N- to C-terminus: Thyrotropin-releasing hormone receptor (393 aa).

The Extracellular portion of the chain corresponds to methionine 1 to threonine 28. N-linked (GlcNAc...) asparagine glycosylation is found at asparagine 3 and asparagine 10. The helical transmembrane segment at isoleucine 29–methionine 51 threads the bilayer. Topologically, residues arginine 52–asparagine 61 are cytoplasmic. A helical membrane pass occupies residues cysteine 62–isoleucine 83. Residues threonine 84 to leucine 99 are Extracellular-facing. A disulfide bond links cysteine 98 and cysteine 179. The helical transmembrane segment at cysteine 100 to isoleucine 121 threads the bilayer. Over glutamate 122–lysine 144 the chain is Cytoplasmic. A helical membrane pass occupies residues isoleucine 145–isoleucine 168. Topologically, residues serine 169 to leucine 193 are extracellular. The chain crosses the membrane as a helical span at residues methionine 194–alanine 215. Residues arginine 216–lysine 266 are Cytoplasmic-facing. Residues methionine 267–valine 288 traverse the membrane as a helical segment. The Extracellular segment spans residues asparagine 289–phenylalanine 296. The chain crosses the membrane as a helical span at residues glutamine 297 to isoleucine 319. Over tyrosine 320–asparagine 393 the chain is Cytoplasmic.

This sequence belongs to the G-protein coupled receptor 1 family.

The protein resides in the cell membrane. In terms of biological role, receptor for thyrotropin-releasing hormone (TRH). Upon ligand binding, this G-protein-coupled receptor triggers activation of the phosphatidylinositol (IP3)-calcium-protein kinase C (PKC) pathway. This Mus musculus (Mouse) protein is Thyrotropin-releasing hormone receptor (Trhr).